Here is a 209-residue protein sequence, read N- to C-terminus: Ribosomal RNA large subunit methyltransferase E (209 aa).

5 residues coordinate S-adenosyl-L-methionine: Gly-63, Trp-65, Asp-83, Asp-99, and Asp-124. Lys-164 functions as the Proton acceptor in the catalytic mechanism.

It belongs to the class I-like SAM-binding methyltransferase superfamily. RNA methyltransferase RlmE family.

The protein localises to the cytoplasm. The enzyme catalyses uridine(2552) in 23S rRNA + S-adenosyl-L-methionine = 2'-O-methyluridine(2552) in 23S rRNA + S-adenosyl-L-homocysteine + H(+). In terms of biological role, specifically methylates the uridine in position 2552 of 23S rRNA at the 2'-O position of the ribose in the fully assembled 50S ribosomal subunit. This is Ribosomal RNA large subunit methyltransferase E from Sodalis glossinidius (strain morsitans).